The primary structure comprises 305 residues: Oxidoreductase OpS7 (305 aa).

The protein belongs to the oxidoreductase OpS7 family.

It participates in secondary metabolite biosynthesis. Oxidoreductase; part of the gene cluster that mediates the biosynthesis of the bibenzoquinone oosporein, a metabolite required for fungal virulence that acts by evading host immunity to facilitate fungal multiplication in insects. The non-reducing polyketide synthase OpS1 produces orsellinic acid by condensing acetyl-CoA with 3 malonyl-CoA units. Orsellinic acid is then hydroxylated to benzenetriol by the hydroxylase OpS4. The intermediate is oxidized either nonenzymatically to 5,5'-dideoxy-oosporein or enzymatically to benzenetetrol by the oxidoreductase OpS7. The latter is further dimerized to oosporein by the catalase OpS5. OpS6 probably functions en route for protecting cells against oxidative stress by scavenging any leaked free radical form of benzenetetrol by activating the thiol group of glutathione. The chain is Oxidoreductase OpS7 from Beauveria bassiana (strain ARSEF 2860) (White muscardine disease fungus).